Consider the following 523-residue polypeptide: 2-isopropylmalate synthase (523 aa).

One can recognise a Pyruvate carboxyltransferase domain in the interval 5–267 (VIIFDTTLRD…HTAINHQEIW (263 aa)). The Mn(2+) site is built by aspartate 14, histidine 202, histidine 204, and asparagine 238. The segment at 392–523 (RLDYFSVQSG…QHNENNKETV (132 aa)) is regulatory domain.

This sequence belongs to the alpha-IPM synthase/homocitrate synthase family. LeuA type 1 subfamily. Homodimer. It depends on Mn(2+) as a cofactor.

Its subcellular location is the cytoplasm. It catalyses the reaction 3-methyl-2-oxobutanoate + acetyl-CoA + H2O = (2S)-2-isopropylmalate + CoA + H(+). It participates in amino-acid biosynthesis; L-leucine biosynthesis; L-leucine from 3-methyl-2-oxobutanoate: step 1/4. Functionally, catalyzes the condensation of the acetyl group of acetyl-CoA with 3-methyl-2-oxobutanoate (2-ketoisovalerate) to form 3-carboxy-3-hydroxy-4-methylpentanoate (2-isopropylmalate). This chain is 2-isopropylmalate synthase, found in Shigella flexneri serotype 5b (strain 8401).